A 238-amino-acid chain; its full sequence is Ribonuclease PH (238 aa).

Phosphate contacts are provided by residues Arg-86 and 124–126 (GTR).

Belongs to the RNase PH family. Homohexameric ring arranged as a trimer of dimers.

It catalyses the reaction tRNA(n+1) + phosphate = tRNA(n) + a ribonucleoside 5'-diphosphate. Functionally, phosphorolytic 3'-5' exoribonuclease that plays an important role in tRNA 3'-end maturation. Removes nucleotide residues following the 3'-CCA terminus of tRNAs; can also add nucleotides to the ends of RNA molecules by using nucleoside diphosphates as substrates, but this may not be physiologically important. Probably plays a role in initiation of 16S rRNA degradation (leading to ribosome degradation) during starvation. This chain is Ribonuclease PH, found in Rhizobium rhizogenes (strain K84 / ATCC BAA-868) (Agrobacterium radiobacter).